An 880-amino-acid polypeptide reads, in one-letter code: MALRRSMGRPGLRPLLLAGLASLLLPGSAAAGLKLMGAPVKMTVSQGQPVKLNCSVEGMDDPDIHWMKDGAVVQNASQVSISISEQNWIGLLSLKSAERSDAGLYWCQVKDGEETKISQSVWLTVEGVPFFTVEPKDLAVPPNVPFQLSCEAVGPPEPVTIFWWRGPTKVGGPASSPSVLNVTGVTQRTEFSCEAHNIKGLATSRPAIIRLQAPPAAPFNITVTTISSSNASVAWVPGADGLALLHSCTVQVAHAPGEWEALAVVVPVPPFTCLLRNLAPATNYSLRVRCANALGPSPYGDWVPFQTKGLAPARAPQNFHAIRTDSGLILEWEEVIPEDPGEGPLGPYKLSWVQENGTQDELMVEGTTANLTDWDPQKDLVLRVCASNAIGDGPWSQPLVVSSHDHAGRQGPPHSRTSWVPVVLGVLTALITAAALALILLRKRRKETRFGQAFDSVMARGEPAVHFRAARSFNRERPERIEATLDSLGISDELKEKLEDVLIPEQQFTLGRMLGKGEFGSVREAQLKQEDGSFVKVAVKMLKADIIASSDIEEFLREAACMKEFDHPHVAKLVGVSLRSRAKGRLPIPMVILPFMKHGDLHAFLLASRIGENPFNLPLQTLVRFMVDIACGMEYLSSRNFIHRDLAARNCMLAEDMTVCVADFGLSRKIYSGDYYRQGCASKLPVKWLALESLADNLYTVHSDVWAFGVTMWEIMTRGQTPYAGIENAEIYNYLISGNRLKQPPECMEEVYDLMYQCWSADPKQRPSFTCLRMELENILGHLSVLSTSQDPLYINIERAGQPAENGSPELPCGEQSSSEAGDGSGMGAIGGIPSDCRYIFSPGGLAESPGQLEQQPESPLNENQRLLLLQQGLLPHSSC.

Residues 1-30 (MALRRSMGRPGLRPLLLAGLASLLLPGSAA) form the signal peptide. 2 Ig-like C2-type domains span residues 31–118 (AGLK…TKIS) and 129–210 (PFFT…AIIR). Over 31-419 (AGLKLMGAPV…QGPPHSRTSW (389 aa)) the chain is Extracellular. Asparagine 53, asparagine 75, asparagine 181, asparagine 220, asparagine 230, asparagine 283, asparagine 356, and asparagine 370 each carry an N-linked (GlcNAc...) asparagine glycan. 2 cysteine pairs are disulfide-bonded: cysteine 54/cysteine 107 and cysteine 150/cysteine 193. Fibronectin type-III domains follow at residues 217-310 (APFN…TKGL) and 315-406 (APQN…SHDH). The chain crosses the membrane as a helical span at residues 420–440 (VPVVLGVLTALITAAALALIL). Topologically, residues 441 to 880 (LRKRRKETRF…QQGLLPHSSC (440 aa)) are cytoplasmic. Residue serine 456 is modified to Phosphoserine. Residues 508-785 (FTLGRMLGKG…LENILGHLSV (278 aa)) enclose the Protein kinase domain. ATP is bound by residues 514-522 (LGKGEFGSV) and lysine 540. Residue aspartate 645 is the Proton acceptor of the active site. Phosphotyrosine; by autocatalysis occurs at positions 671, 675, 676, and 794. 2 disordered regions span residues 804-827 (AENG…GSGM) and 842-864 (SPGG…LNEN). Serine 808 and serine 859 each carry phosphoserine. Polar residues predominate over residues 852–864 (QLEQQPESPLNEN).

The protein belongs to the protein kinase superfamily. Tyr protein kinase family. AXL/UFO subfamily. In terms of assembly, monomer and homodimer. Interacts (via N-terminus) with extracellular ligands TULP1 and GAS6. Interacts with PIK3R1; this interaction increases PI3-kinase activity. In terms of processing, autophosphorylated. In terms of tissue distribution, abundant in the brain and lower levels in other tissues.

Its subcellular location is the cell membrane. The catalysed reaction is L-tyrosyl-[protein] + ATP = O-phospho-L-tyrosyl-[protein] + ADP + H(+). Receptor tyrosine kinase that transduces signals from the extracellular matrix into the cytoplasm by binding to several ligands including TULP1 or GAS6. Regulates many physiological processes including cell survival, migration and differentiation. Ligand binding at the cell surface induces dimerization and autophosphorylation of TYRO3 on its intracellular domain that provides docking sites for downstream signaling molecules. Following activation by ligand, interacts with PIK3R1 and thereby enhances PI3-kinase activity. Activates the AKT survival pathway, including nuclear translocation of NF-kappa-B and up-regulation of transcription of NF-kappa-B-regulated genes. TYRO3 signaling plays a role in various processes such as neuron protection from excitotoxic injury, platelet aggregation and cytoskeleton reorganization. Also plays an important role in inhibition of Toll-like receptors (TLRs)-mediated innate immune response by activating STAT1, which selectively induces production of suppressors of cytokine signaling SOCS1 and SOCS3. The sequence is that of Tyrosine-protein kinase receptor TYRO3 (Tyro3) from Rattus norvegicus (Rat).